Reading from the N-terminus, the 233-residue chain is Large ribosomal subunit protein uL1 (233 aa).

This sequence belongs to the universal ribosomal protein uL1 family. In terms of assembly, part of the 50S ribosomal subunit.

Its function is as follows. Binds directly to 23S rRNA. The L1 stalk is quite mobile in the ribosome, and is involved in E site tRNA release. In terms of biological role, protein L1 is also a translational repressor protein, it controls the translation of the L11 operon by binding to its mRNA. This Shewanella frigidimarina (strain NCIMB 400) protein is Large ribosomal subunit protein uL1.